A 362-amino-acid chain; its full sequence is Protein-glutamate methylesterase/protein-glutamine glutaminase 5 (362 aa).

Residues 13 to 130 (RVLVVDDSAL…RRFLEESRVR (118 aa)) form the Response regulatory domain. A 4-aspartylphosphate modification is found at Asp-64. Residues 172–362 (LQTTERVVVV…IPPELLRLCR (191 aa)) enclose the CheB-type methylesterase domain. Catalysis depends on residues Ser-184, His-210, and Asp-306.

The protein belongs to the CheB family. Phosphorylated by CheA. Phosphorylation of the N-terminal regulatory domain activates the methylesterase activity.

It is found in the cytoplasm. The catalysed reaction is [protein]-L-glutamate 5-O-methyl ester + H2O = L-glutamyl-[protein] + methanol + H(+). The enzyme catalyses L-glutaminyl-[protein] + H2O = L-glutamyl-[protein] + NH4(+). Its function is as follows. Involved in chemotaxis. Part of a chemotaxis signal transduction system that modulates chemotaxis in response to various stimuli. Catalyzes the demethylation of specific methylglutamate residues introduced into the chemoreceptors (methyl-accepting chemotaxis proteins or MCP) by CheR. Also mediates the irreversible deamidation of specific glutamine residues to glutamic acid. This is Protein-glutamate methylesterase/protein-glutamine glutaminase 5 from Anaeromyxobacter dehalogenans (strain 2CP-C).